The following is a 312-amino-acid chain: 4-hydroxy-3-methylbut-2-enyl diphosphate reductase (312 aa).

[4Fe-4S] cluster is bound at residue Cys-14. (2E)-4-hydroxy-3-methylbut-2-enyl diphosphate-binding residues include His-43 and His-76. The dimethylallyl diphosphate site is built by His-43 and His-76. Residues His-43 and His-76 each coordinate isopentenyl diphosphate. Cys-98 is a [4Fe-4S] cluster binding site. A (2E)-4-hydroxy-3-methylbut-2-enyl diphosphate-binding site is contributed by His-125. His-125 is a dimethylallyl diphosphate binding site. His-125 contributes to the isopentenyl diphosphate binding site. The active-site Proton donor is Glu-127. Thr-165 is a binding site for (2E)-4-hydroxy-3-methylbut-2-enyl diphosphate. Cys-195 contributes to the [4Fe-4S] cluster binding site. The (2E)-4-hydroxy-3-methylbut-2-enyl diphosphate site is built by Ser-223, Ser-224, Asn-225, and Ser-269. The dimethylallyl diphosphate site is built by Ser-223, Ser-224, Asn-225, and Ser-269. Ser-223, Ser-224, Asn-225, and Ser-269 together coordinate isopentenyl diphosphate.

It belongs to the IspH family. Requires [4Fe-4S] cluster as cofactor.

It carries out the reaction isopentenyl diphosphate + 2 oxidized [2Fe-2S]-[ferredoxin] + H2O = (2E)-4-hydroxy-3-methylbut-2-enyl diphosphate + 2 reduced [2Fe-2S]-[ferredoxin] + 2 H(+). It catalyses the reaction dimethylallyl diphosphate + 2 oxidized [2Fe-2S]-[ferredoxin] + H2O = (2E)-4-hydroxy-3-methylbut-2-enyl diphosphate + 2 reduced [2Fe-2S]-[ferredoxin] + 2 H(+). It functions in the pathway isoprenoid biosynthesis; dimethylallyl diphosphate biosynthesis; dimethylallyl diphosphate from (2E)-4-hydroxy-3-methylbutenyl diphosphate: step 1/1. It participates in isoprenoid biosynthesis; isopentenyl diphosphate biosynthesis via DXP pathway; isopentenyl diphosphate from 1-deoxy-D-xylulose 5-phosphate: step 6/6. Its function is as follows. Catalyzes the conversion of 1-hydroxy-2-methyl-2-(E)-butenyl 4-diphosphate (HMBPP) into a mixture of isopentenyl diphosphate (IPP) and dimethylallyl diphosphate (DMAPP). Acts in the terminal step of the DOXP/MEP pathway for isoprenoid precursor biosynthesis. This chain is 4-hydroxy-3-methylbut-2-enyl diphosphate reductase, found in Leptospira interrogans serogroup Icterohaemorrhagiae serovar copenhageni (strain Fiocruz L1-130).